Consider the following 332-residue polypeptide: Ribose-phosphate pyrophosphokinase (332 aa).

55 to 57 (DGE) is a binding site for ATP. H148 and D187 together coordinate Mg(2+). K211 is an active-site residue. D-ribose 5-phosphate is bound by residues R213, D237, and 241 to 245 (DTGGT).

The protein belongs to the ribose-phosphate pyrophosphokinase family. Class I subfamily. As to quaternary structure, homohexamer. Requires Mg(2+) as cofactor.

The protein localises to the cytoplasm. The catalysed reaction is D-ribose 5-phosphate + ATP = 5-phospho-alpha-D-ribose 1-diphosphate + AMP + H(+). It functions in the pathway metabolic intermediate biosynthesis; 5-phospho-alpha-D-ribose 1-diphosphate biosynthesis; 5-phospho-alpha-D-ribose 1-diphosphate from D-ribose 5-phosphate (route I): step 1/1. In terms of biological role, involved in the biosynthesis of the central metabolite phospho-alpha-D-ribosyl-1-pyrophosphate (PRPP) via the transfer of pyrophosphoryl group from ATP to 1-hydroxyl of ribose-5-phosphate (Rib-5-P). The polypeptide is Ribose-phosphate pyrophosphokinase (Prochlorococcus marinus (strain MIT 9313)).